The chain runs to 256 residues: Trypsin, alkaline A (256 aa).

Residues methionine 1–alanine 17 form the signal peptide. A propeptide spans valine 18–arginine 24 (activation peptide). Residues isoleucine 25–serine 256 enclose the Peptidase S1 domain. An intrachain disulfide couples cysteine 55 to cysteine 71. Active-site charge relay system residues include histidine 70 and aspartate 115. 2 disulfides stabilise this stretch: cysteine 180–cysteine 197 and cysteine 209–cysteine 233. The active-site Charge relay system is the serine 213.

It belongs to the peptidase S1 family. As to expression, midgut.

The protein localises to the secreted. The protein resides in the extracellular space. It carries out the reaction Preferential cleavage: Arg-|-Xaa, Lys-|-Xaa.. The sequence is that of Trypsin, alkaline A from Manduca sexta (Tobacco hawkmoth).